The primary structure comprises 504 residues: Deoxyguanosinetriphosphate triphosphohydrolase (504 aa).

Residues 66-273 (RLTHSMEVQQ…MEAADDISYC (208 aa)) enclose the HD domain.

Belongs to the dGTPase family. Type 1 subfamily. As to quaternary structure, homotetramer. Mg(2+) is required as a cofactor.

It catalyses the reaction dGTP + H2O = 2'-deoxyguanosine + triphosphate + H(+). DGTPase preferentially hydrolyzes dGTP over the other canonical NTPs. This chain is Deoxyguanosinetriphosphate triphosphohydrolase, found in Citrobacter koseri (strain ATCC BAA-895 / CDC 4225-83 / SGSC4696).